The primary structure comprises 400 residues: Phosphoglycerate kinase (400 aa).

Substrate is bound by residues 21-23 (DFN), Arg-37, 60-63 (HLGR), Arg-121, and Arg-154. ATP is bound by residues Lys-204, Glu-326, and 355–358 (GGDS).

Belongs to the phosphoglycerate kinase family. As to quaternary structure, monomer.

The protein resides in the cytoplasm. It carries out the reaction (2R)-3-phosphoglycerate + ATP = (2R)-3-phospho-glyceroyl phosphate + ADP. It participates in carbohydrate degradation; glycolysis; pyruvate from D-glyceraldehyde 3-phosphate: step 2/5. The chain is Phosphoglycerate kinase from Chloroflexus aurantiacus (strain ATCC 29366 / DSM 635 / J-10-fl).